We begin with the raw amino-acid sequence, 980 residues long: Glutamate receptor ionotropic, kainate 5 (980 aa).

The N-terminal stretch at 1 to 14 is a signal peptide; sequence MPAELLLLLIVAFA. At 15–544 the chain is on the extracellular side; the sequence is SPSCQVLSSL…YFSFLDPFSP (530 aa). Cystine bridges form between cysteine 36–cysteine 292, cysteine 83–cysteine 334, and cysteine 165–cysteine 170. 10 N-linked (GlcNAc...) asparagine glycosylation sites follow: asparagine 219, asparagine 271, asparagine 285, asparagine 322, asparagine 372, asparagine 394, asparagine 400, asparagine 407, asparagine 414, and asparagine 478. A helical membrane pass occupies residues 545-565; sequence AVWLFMLLAYLAVSCVLFLAA. The Cytoplasmic portion of the chain corresponds to 566–622; it reads RLSPYEWYNPHPCLRARPHILENQYTLGNSLWFPVGGFMQQGSEIMPRALSTRCVSG. A helical transmembrane segment spans residues 623-643; that stretch reads VWWAFTLIIISSYTANLAAFL. Residues 644–803 lie on the Extracellular side of the membrane; it reads TVQRMEVPVE…HRAKGLGMEN (160 aa). N-linked (GlcNAc...) asparagine glycosylation occurs at asparagine 735. Residues 804–824 traverse the membrane as a helical segment; it reads IGGIFIVLICGLIIAVFVAVM. Residues 825–980 are Cytoplasmic-facing; the sequence is EFIWSTRRSA…AGPRELAEHE (156 aa). 2 disordered regions span residues 891-927 and 944-980; these read YSAG…PTPC and ASGA…AEHE. Over residues 894 to 903 the composition is skewed to gly residues; that stretch reads GAGGDAGSAH.

This sequence belongs to the glutamate-gated ion channel (TC 1.A.10.1) family. GRIK5 subfamily. As to quaternary structure, homotetramer. Heterotetramer with GRIK2. Can form functional heteromeric receptors with GRIK1 and GRIK2. Can form functional heteromeric receptors with GRIK3.

The protein localises to the cell membrane. The protein resides in the postsynaptic cell membrane. It is found in the presynaptic cell membrane. Its function is as follows. Ionotropic glutamate receptor that functions as a cation-permeable ligand-gated ion channel, gated by L-glutamate and the glutamatergic agonist kainic acid. Cannot form functional channels on its own and produces channel activity only in heteromeric assembly with GRIK1 and GRIK2 subunits. Can form functional heteromeric receptors with GRIK3. This is Glutamate receptor ionotropic, kainate 5 (GRIK5) from Homo sapiens (Human).